The primary structure comprises 372 residues: Dof zinc finger protein DOF5.6 (372 aa).

The Dof-type zinc finger occupies 73–127 (QKCPRCESTHTKFCYYNNYSLSQPRYFCKTCRRYWTKGGTLRNIPVGGGCRKNKK). Residues Cys-75, Cys-78, Cys-100, and Cys-103 each coordinate Zn(2+). The disordered stretch occupies residues 117–146 (PVGGGCRKNKKPSSSNSSSSTSSGKKPSNI). Residues 128–145 (PSSSNSSSSTSSGKKPSN) are compositionally biased toward low complexity.

As to expression, the PEAR proteins (e.g. DOF2.4, DOF5.1, DOF3.2, DOF1.1, DOF5.6 and DOF5.3) form a short-range concentration gradient that peaks at protophloem sieve elements (PSE). Preferentially expressed in the vasculature of all organs, including seedlings, roots, stems, buds, leaves, flowers and siliques, and particularly in the cambium, phloem and interfascicular parenchyma cells of inflorescence stems.

Its subcellular location is the nucleus. Its function is as follows. Transcription factor that binds specifically to a 5'-AA[AG]G-3' consensus core sequence. Promotes expression. The PEAR proteins (e.g. DOF2.4, DOF5.1, DOF3.2, DOF1.1, DOF5.6 and DOF5.3) activate gene expression that promotes radial growth of protophloem sieve elements. Involved in the regulation of interfascicular cambium formation and vascular tissue development, particularly at a very early stage during inflorescence stem development; promotes both cambium activity and phloem specification, but prevents xylem specification. The chain is Dof zinc finger protein DOF5.6 from Arabidopsis thaliana (Mouse-ear cress).